Reading from the N-terminus, the 522-residue chain is Cytochrome P450 monooxygenase AKT7 (522 aa).

The helical transmembrane segment at 10 to 30 (LYVTCTVLAALILGYIQAMII) threads the bilayer. Residue C452 coordinates heme.

The protein belongs to the cytochrome P450 family. Heme is required as a cofactor.

Its subcellular location is the membrane. Its pathway is mycotoxin biosynthesis. Functionally, cytochrome P450 monooxygenase; part of the gene clusters that mediate the biosynthesis of the host-selective toxins (HSTs) AK-toxins responsible for Japanese pear black spot disease by the Japanese pear pathotype. AK-toxins are esters of 9,10-epoxy 8-hydroxy 9-methyldecatrienoic acid (EDA). On cellular level, AK-toxins affect plasma membrane of susceptible cells and cause a sudden increase in loss of K(+) after a few minutes of toxin treatment. The acyl-CoA ligase AKT1, the hydrolase AKT2 and enoyl-CoA hydratase AKT3 are all involved in the biosynthesis of the AK-, AF- and ACT-toxin common 9,10-epoxy-8-hydroxy-9-methyl-decatrienoic acid (EDA) structural moiety. Part of the EDA biosynthesis occurs in the peroxisome since these 3 enzymes are localized in peroxisomes. The exact roles of the 3 enzymes, as well as of additional AK-toxin clusters enzymes, including AKT4, AKT6 and AKTS1, have still to be elucidated. The Cytochrome P450 monooxygenase AKT7 on the other side functions to limit production of EDA and AK-toxin, probably via the catalysis of a side reaction of EDA or its precursor. This chain is Cytochrome P450 monooxygenase AKT7, found in Alternaria alternata (Alternaria rot fungus).